The following is a 521-amino-acid chain: Matrix metalloproteinase-A (521 aa).

The first 21 residues, 1 to 21 (MFTGLHDILIILFLLVTLKIA), serve as a signal peptide directing secretion. The propeptide at 22–95 (QNVDHTKFLQ…EDHQKSRGKR (74 aa)) is activation peptide. The Cysteine switch signature appears at 78-85 (PRCGHPDV). Cysteine 80 lines the Zn(2+) pocket. Topologically, residues 96–500 (YAPPQFKWKE…FCPRNEKLVL (405 aa)) are extracellular. An N-linked (GlcNAc...) asparagine glycan is attached at asparagine 199. Histidine 215 contributes to the Zn(2+) binding site. Glutamate 216 is a catalytic residue. Zn(2+) is bound by residues histidine 219 and histidine 225. A disordered region spans residues 259 to 298 (KASKKENEEEERKTENEDKRRKTEKDRGRTREHESDDIRP). Residues 261–298 (SKKENEEEERKTENEDKRRKTEKDRGRTREHESDDIRP) show a composition bias toward basic and acidic residues. Hemopexin repeat units lie at residues 300–347 (ECRV…FPGL), 391–443 (EKYV…WARV), and 444–492 (PKGV…FGFC). Residue asparagine 469 is glycosylated (N-linked (GlcNAc...) asparagine). Residues 501-521 (NSSSSHFSLIYATITILILIF) form a helical membrane-spanning segment.

This sequence belongs to the peptidase M10A family. Requires Zn(2+) as cofactor. In terms of tissue distribution, expressed in the anchor cell. Expressed in the anchor cell throughout the L3 and the early L4 stage, but not in vulva precursor cells P6.p, P6.px, or P6.pxx. Expression in P6.pxxx cells begins in late-L4 stage. During L4 lethargus, expressed in all four vulE cells, but not in vulF cells. The expression in vulE cells persists in adulthood. In males, expressed in the linker cell (LC) from the early L4 stage until LC death during the L4-to-adult molt.

The protein localises to the cell membrane. It is found in the basolateral cell membrane. Functionally, metalloprotease which, together with cadherin cdh-3 and hemicentin him-4, plays a role in anchor cell (AC) invasion during postembryonic vulval development probably by promoting the degradation of the basement membrane separating the gonad from the vulva epithelium. In Caenorhabditis elegans, this protein is Matrix metalloproteinase-A.